Consider the following 295-residue polypeptide: 4-diphosphocytidyl-2-C-methyl-D-erythritol kinase (295 aa).

Lys18 is an active-site residue. Position 101–111 (101–111 (PMGGGIGGGSS)) interacts with ATP. Asp143 is an active-site residue.

It belongs to the GHMP kinase family. IspE subfamily.

The catalysed reaction is 4-CDP-2-C-methyl-D-erythritol + ATP = 4-CDP-2-C-methyl-D-erythritol 2-phosphate + ADP + H(+). Its pathway is isoprenoid biosynthesis; isopentenyl diphosphate biosynthesis via DXP pathway; isopentenyl diphosphate from 1-deoxy-D-xylulose 5-phosphate: step 3/6. Catalyzes the phosphorylation of the position 2 hydroxy group of 4-diphosphocytidyl-2C-methyl-D-erythritol. The chain is 4-diphosphocytidyl-2-C-methyl-D-erythritol kinase from Vibrio vulnificus (strain YJ016).